We begin with the raw amino-acid sequence, 1383 residues long: DNA-directed RNA polymerase subunit beta (1383 aa).

It belongs to the RNA polymerase beta chain family. As to quaternary structure, the RNAP catalytic core consists of 2 alpha, 1 beta, 1 beta' and 1 omega subunit. When a sigma factor is associated with the core the holoenzyme is formed, which can initiate transcription.

It carries out the reaction RNA(n) + a ribonucleoside 5'-triphosphate = RNA(n+1) + diphosphate. DNA-dependent RNA polymerase catalyzes the transcription of DNA into RNA using the four ribonucleoside triphosphates as substrates. The chain is DNA-directed RNA polymerase subunit beta from Bartonella tribocorum (strain CIP 105476 / IBS 506).